The primary structure comprises 348 residues: Gamma-glutamyl hydrolase 1 (348 aa).

A signal peptide spans 1–23 (MIDNNCLYKEELNRNSYSGLAKE). A Gamma-glutamyl hydrolase domain is found at 46-342 (SPDPNLNYRP…RGYDEVYIFT (297 aa)). Cys-156 (nucleophile) is an active-site residue. The active site involves His-269.

The protein belongs to the peptidase C26 family. In terms of tissue distribution, highly expressed in roots and at lower levels in leaves, stems and siliques.

It localises to the vacuole. Its subcellular location is the secreted. It is found in the extracellular space. The protein localises to the cell wall. It carries out the reaction (6S)-5,6,7,8-tetrahydrofolyl-(gamma-L-Glu)(n) + (n-1) H2O = (6S)-5,6,7,8-tetrahydrofolate + (n-1) L-glutamate. Cleaves the polyglutamate sidechains of folate polyglutamates in the vacuole. Is important for polyglutamyl tail length determination before vacuolar exit. Plays a role in folate stability and intracellular folate content. The polypeptide is Gamma-glutamyl hydrolase 1 (GGH1) (Arabidopsis thaliana (Mouse-ear cress)).